The primary structure comprises 1029 residues: Chitin synthase 2 (1029 aa).

Disordered stretches follow at residues 1–160 (MDRP…GARS), 174–216 (SDVD…SHLR), and 234–257 (AHYG…QKSR). Over residues 61 to 77 (PSVSSIHSRPSSISNIP) the composition is skewed to low complexity. Positions 244 to 257 (DQQRRGVREPQKSR) are enriched in basic and acidic residues. N-linked (GlcNAc...) asparagine glycosylation occurs at asparagine 348. A run of 8 helical transmembrane segments spans residues 639–659 (WLNG…QLWA), 681–701 (VLFT…VAGG), 716–736 (LYIF…QFIL), 752–772 (SMVI…YIVI), 791–811 (NLIV…FIYL), 820–840 (SIQY…YAFC), 918–938 (YMVV…SEIY), and 952–972 (ILWS…TFAI).

It belongs to the chitin synthase family. Class II subfamily.

It localises to the cell membrane. The catalysed reaction is [(1-&gt;4)-N-acetyl-beta-D-glucosaminyl](n) + UDP-N-acetyl-alpha-D-glucosamine = [(1-&gt;4)-N-acetyl-beta-D-glucosaminyl](n+1) + UDP + H(+). Its function is as follows. Polymerizes chitin, a structural polymer of the cell wall and septum, by transferring the sugar moiety of UDP-GlcNAc to the non-reducing end of the growing chitin polymer. Plays an important role in cell wall integrity and has distinct functions in invasive hyphae and vegetative hyphae, but is not involved in plant infection. This chain is Chitin synthase 2, found in Pyricularia oryzae (strain 70-15 / ATCC MYA-4617 / FGSC 8958) (Rice blast fungus).